The sequence spans 122 residues: Large ribosomal subunit protein uL18 (122 aa).

Belongs to the universal ribosomal protein uL18 family. As to quaternary structure, part of the 50S ribosomal subunit; part of the 5S rRNA/L5/L18/L25 subcomplex. Contacts the 5S and 23S rRNAs.

This is one of the proteins that bind and probably mediate the attachment of the 5S RNA into the large ribosomal subunit, where it forms part of the central protuberance. In Synechococcus sp. (strain JA-2-3B'a(2-13)) (Cyanobacteria bacterium Yellowstone B-Prime), this protein is Large ribosomal subunit protein uL18.